The sequence spans 287 residues: MFARLPLYLRLVRMDKPIGSLLLLWPTLNALWIASDGHPSVSLLVIFALGTILMRSAGCAINDYADRDFDRYVKRTENRPITSGKIKAWEAVALAAGLSLVAFLLILPLNALTKELSVAALFVAGTYPFTKRFFAIPQAYLGIAFGFGIPMAFAAVQNQVPLLAWVMLIANVFWSVAYDTEYAMVDRDDDIKIGIRTSALTFGRFDVLAIMLCYAVTLGIYVGIGFTLGFGVLYWIGLAAAAGCAVYHYTLIKGRERMPCFAAFRHNNWLGGALFAGIAAHYAAQAF.

Transmembrane regions (helical) follow at residues 41 to 61, 92 to 112, 133 to 153, 160 to 180, 197 to 217, and 267 to 287; these read VSLL…GCAI, VALA…LNAL, FFAI…PMAF, VPLL…AYDT, TSAL…YAVT, and NNWL…AQAF.

This sequence belongs to the UbiA prenyltransferase family. Mg(2+) is required as a cofactor.

The protein resides in the cell inner membrane. The enzyme catalyses all-trans-octaprenyl diphosphate + 4-hydroxybenzoate = 4-hydroxy-3-(all-trans-octaprenyl)benzoate + diphosphate. Its pathway is cofactor biosynthesis; ubiquinone biosynthesis. Its function is as follows. Catalyzes the prenylation of para-hydroxybenzoate (PHB) with an all-trans polyprenyl group. Mediates the second step in the final reaction sequence of ubiquinone-8 (UQ-8) biosynthesis, which is the condensation of the polyisoprenoid side chain with PHB, generating the first membrane-bound Q intermediate 3-octaprenyl-4-hydroxybenzoate. This chain is 4-hydroxybenzoate octaprenyltransferase, found in Paraburkholderia phymatum (strain DSM 17167 / CIP 108236 / LMG 21445 / STM815) (Burkholderia phymatum).